Here is a 279-residue protein sequence, read N- to C-terminus: MSAVLLDGKALAAKKRDELKSEVTKLKERGITPGLAVILVGNDPASTVYVRSKQKACEQIGIYSVLKELPASTSEEELLTEIDRLNNDPTIHGILVQLPLPEQISEQAVIERISPAKDVDGFHPISVGRMMIGEDTFLPCTPFGVLVMLQEANVEIAGKHVVVVGRSNIVGKPVGQLMLNEHATVTYCHSRTKNLTEITKQADILIVAVGRARFIDASHVKEGAVVIDVGINRVDGKLCGDVDFESVREVASHLTPVPGGVGPMTITMLLANTIQAAKE.

NADP(+)-binding positions include 165-167 (GRS), Ser190, and Ile231.

This sequence belongs to the tetrahydrofolate dehydrogenase/cyclohydrolase family. Homodimer.

It catalyses the reaction (6R)-5,10-methylene-5,6,7,8-tetrahydrofolate + NADP(+) = (6R)-5,10-methenyltetrahydrofolate + NADPH. It carries out the reaction (6R)-5,10-methenyltetrahydrofolate + H2O = (6R)-10-formyltetrahydrofolate + H(+). The protein operates within one-carbon metabolism; tetrahydrofolate interconversion. Its function is as follows. Catalyzes the oxidation of 5,10-methylenetetrahydrofolate to 5,10-methenyltetrahydrofolate and then the hydrolysis of 5,10-methenyltetrahydrofolate to 10-formyltetrahydrofolate. In Halalkalibacterium halodurans (strain ATCC BAA-125 / DSM 18197 / FERM 7344 / JCM 9153 / C-125) (Bacillus halodurans), this protein is Bifunctional protein FolD.